A 361-amino-acid chain; its full sequence is Endo-1,4-beta-xylanase 2 (361 aa).

The first 26 residues, 1 to 26 (MHFSTITAALALLGLGAATPTDYSTS), serve as a signal peptide directing secretion. Positions 46–354 (IGTALTIRDD…KPAYSSVLKT (309 aa)) constitute a GH10 domain. N-linked (GlcNAc...) asparagine glycans are attached at residues Asn-88 and Asn-130. Catalysis depends on Glu-160, which acts as the Proton donor. Glu-276 functions as the Nucleophile in the catalytic mechanism. A disulfide bond links Cys-304 and Cys-310.

The protein belongs to the glycosyl hydrolase 10 (cellulase F) family.

The protein localises to the secreted. It carries out the reaction Endohydrolysis of (1-&gt;4)-beta-D-xylosidic linkages in xylans.. The protein operates within glycan degradation; xylan degradation. Functionally, endo-1,4-beta-xylanase involved in the hydrolysis of xylan, a major structural heterogeneous polysaccharide found in plant biomass representing the second most abundant polysaccharide in the biosphere, after cellulose. Hydrolyzes birch-wood xylan, with a similar activity toward oat-spelt xylan. Also shows weak activities toward pNP-beta-D-cellobioside and pNP-beta-D-xylopyranoside, but no detectable activity toward carboxymethyl cellulose and pNP-beta-L-arabinofuranoside.-. This chain is Endo-1,4-beta-xylanase 2 (xynII), found in Aureobasidium pullulans (Black yeast).